The following is a 166-amino-acid chain: NAD(P)H-quinone oxidoreductase subunit I, chloroplastic (166 aa).

2 4Fe-4S ferredoxin-type domains span residues 55-84 (GRIHFEFDKCIACEVCVRVCPIDLPVVDWK) and 95-124 (LNYSIDFGICIFCGNCVEYCPTNCLSMTEE). [4Fe-4S] cluster contacts are provided by Cys-64, Cys-67, Cys-70, Cys-74, Cys-104, Cys-107, Cys-110, and Cys-114.

This sequence belongs to the complex I 23 kDa subunit family. In terms of assembly, NDH is composed of at least 16 different subunits, 5 of which are encoded in the nucleus. The cofactor is [4Fe-4S] cluster.

Its subcellular location is the plastid. The protein localises to the chloroplast thylakoid membrane. It carries out the reaction a plastoquinone + NADH + (n+1) H(+)(in) = a plastoquinol + NAD(+) + n H(+)(out). The catalysed reaction is a plastoquinone + NADPH + (n+1) H(+)(in) = a plastoquinol + NADP(+) + n H(+)(out). NDH shuttles electrons from NAD(P)H:plastoquinone, via FMN and iron-sulfur (Fe-S) centers, to quinones in the photosynthetic chain and possibly in a chloroplast respiratory chain. The immediate electron acceptor for the enzyme in this species is believed to be plastoquinone. Couples the redox reaction to proton translocation, and thus conserves the redox energy in a proton gradient. The chain is NAD(P)H-quinone oxidoreductase subunit I, chloroplastic from Stevia rebaudiana (Stevia).